A 180-amino-acid polypeptide reads, in one-letter code: Large ribosomal subunit protein uL5c (180 aa).

The protein belongs to the universal ribosomal protein uL5 family. As to quaternary structure, part of the 50S ribosomal subunit; contacts the 5S rRNA.

It localises to the plastid. The protein resides in the chloroplast. Binds 5S rRNA, forms part of the central protuberance of the 50S subunit. This Tetradesmus obliquus (Green alga) protein is Large ribosomal subunit protein uL5c (rpl5).